The chain runs to 437 residues: Elongation factor 1-gamma (437 aa).

Ala-2 is subject to N-acetylalanine. In terms of domain architecture, GST N-terminal spans 2–87 (AAGTLYTYPE…YVSNEELRGS (86 aa)). Positions 88 to 216 (TPEAAAQVVQ…VKLCEKMAQF (129 aa)) constitute a GST C-terminal domain. N6-acetyllysine occurs at positions 147 and 212. A compositionally biased stretch (basic and acidic residues) spans 221-254 (FAESQPKKDTPRKEKGSREEKQKPQAERKEEKKA). The tract at residues 221-268 (FAESQPKKDTPRKEKGSREEKQKPQAERKEEKKAAAPAPEEEMDECEQ) is disordered. Residue Lys-253 forms a Glycyl lysine isopeptide (Lys-Gly) (interchain with G-Cter in SUMO1) linkage. Residues 276–437 (AKDPFAHLPK…KAFNQGKIFK (162 aa)) enclose the EF-1-gamma C-terminal domain. A Glycyl lysine isopeptide (Lys-Gly) (interchain with G-Cter in SUMO2) cross-link involves residue Lys-285. An N6-acetyllysine modification is found at Lys-401. Lys-434 bears the N6-acetyllysine; alternate mark. An N6-malonyllysine; alternate modification is found at Lys-434.

As to quaternary structure, EF-1 is composed of four subunits: alpha, beta, delta, and gamma.

Functionally, probably plays a role in anchoring the complex to other cellular components. The protein is Elongation factor 1-gamma (EEF1G) of Equus caballus (Horse).